The primary structure comprises 341 residues: tRNA N6-adenosine threonylcarbamoyltransferase (341 aa).

Residues His118 and His122 each contribute to the Fe cation site. Residues 141 to 145 (LVSGG), Asp174, Gly187, and Asn281 contribute to the substrate site. Asp309 contributes to the Fe cation binding site.

This sequence belongs to the KAE1 / TsaD family. Requires Fe(2+) as cofactor.

The protein localises to the cytoplasm. The enzyme catalyses L-threonylcarbamoyladenylate + adenosine(37) in tRNA = N(6)-L-threonylcarbamoyladenosine(37) in tRNA + AMP + H(+). Functionally, required for the formation of a threonylcarbamoyl group on adenosine at position 37 (t(6)A37) in tRNAs that read codons beginning with adenine. Is involved in the transfer of the threonylcarbamoyl moiety of threonylcarbamoyl-AMP (TC-AMP) to the N6 group of A37, together with TsaE and TsaB. TsaD likely plays a direct catalytic role in this reaction. This chain is tRNA N6-adenosine threonylcarbamoyltransferase, found in Desulfitobacterium hafniense (strain Y51).